The following is a 308-amino-acid chain: 4-hydroxyproline 2-epimerase (308 aa).

Catalysis depends on C88, which acts as the Proton acceptor. Residues 89–90 (GH), H208, and D232 contribute to the substrate site. C236 acts as the Proton donor in catalysis. 237-238 (GT) is a substrate binding site.

Belongs to the proline racemase family.

It carries out the reaction trans-4-hydroxy-L-proline = cis-4-hydroxy-D-proline. Its function is as follows. Catalyzes the epimerization of trans-4-hydroxy-L-proline (t4LHyp) to cis-4-hydroxy-D-proline (c4DHyp). Is likely involved in a degradation pathway that converts t4LHyp to alpha-ketoglutarate. Can also catalyze the epimerization of trans-3-hydroxy-L-proline (t3LHyp) to cis-3-hydroxy-D-proline (c3DHyp), albeit with 200-fold lower efficiency. This chain is 4-hydroxyproline 2-epimerase, found in Pseudomonas putida (strain ATCC 700007 / DSM 6899 / JCM 31910 / BCRC 17059 / LMG 24140 / F1).